The chain runs to 248 residues: UPF0736 protein BCB4264_A1231 (248 aa).

It belongs to the UPF0736 family.

The protein is UPF0736 protein BCB4264_A1231 of Bacillus cereus (strain B4264).